The chain runs to 667 residues: Ribosomal oxygenase 1 (667 aa).

Met1 carries the post-translational modification N-acetylmethionine. A compositionally biased stretch (low complexity) spans 1 to 11 (MDGLRASAGLL). Residues 1 to 99 (MDGLRASAGL…ATGREPHGQL (99 aa)) are disordered. Composition is skewed to basic residues over residues 12 to 22 (RRGRLRRRRQQ) and 35 to 44 (RPRKIRRQLR). Ser61, Ser64, and Ser108 each carry phosphoserine. Positions 322 to 467 (CSLRLLCPQA…DFLEAVLPLA (146 aa)) constitute a JmjC domain. Fe cation contacts are provided by His368, Asp370, and His433.

Belongs to the ROX family. NO66 subfamily. As to quaternary structure, interacts with SP7/OSX; the interaction is direct. Interacts with MYC. Interacts with PHF19; leading to its recruitment to H3K36me3 sites. Requires Fe(2+) as cofactor.

Its subcellular location is the nucleus. It localises to the nucleolus. The protein localises to the nucleoplasm. The catalysed reaction is N(6),N(6)-dimethyl-L-lysyl(36)-[histone H3] + 2 2-oxoglutarate + 2 O2 = L-lysyl(36)-[histone H3] + 2 formaldehyde + 2 succinate + 2 CO2. The enzyme catalyses N(6)-methyl-L-lysyl-[protein] + 2-oxoglutarate + O2 = L-lysyl-[protein] + formaldehyde + succinate + CO2. It carries out the reaction L-histidyl-[protein] + 2-oxoglutarate + O2 = (3S)-3-hydroxy-L-histidyl-[protein] + succinate + CO2. Functionally, oxygenase that can act as both a histone lysine demethylase and a ribosomal histidine hydroxylase. Specifically demethylates 'Lys-4' (H3K4me) and 'Lys-36' (H3K36me) of histone H3, thereby playing a central role in histone code. Preferentially demethylates trimethylated H3 'Lys-4' (H3K4me3) and monomethylated H3 'Lys-4' (H3K4me1) residues, while it has weaker activity for dimethylated H3 'Lys-36' (H3K36me2). Acts as a regulator of osteoblast differentiation via its interaction with SP7/OSX by demethylating H3K4me and H3K36me, thereby inhibiting SP7/OSX-mediated promoter activation. Also catalyzes demethylation of non-histone proteins, such as CGAS: demethylation of monomethylated CGAS promotes interaction between CGAS and PARP1, followed by PARP1 inactivation. Also catalyzes the hydroxylation of 60S ribosomal protein L8 on 'His-216', thereby playing a role in ribosome biogenesis. Participates in MYC-induced transcriptional activation. This is Ribosomal oxygenase 1 (RIOX1) from Bos taurus (Bovine).